The primary structure comprises 394 residues: MSPSVEVTPAHTPTSYEVTNSLDSYRGYDHVHWYVGNAKQAASFYITRMGFSPIAYKGLETGSRDVTTHVVGNGQVRFAFSSALRTGEPQADEIHAHLVKHGDAVKDVAFEVDNVEQLFSAAVKKGVRVISEPKVLKDAHGSVTYAVISTYGDTTHTLIERGSYEGAFLPGFVDTSANKDPIAAFLPNIELMHIDHCVGNQDWNEMDNACKYYEETLGFHRFWSVDDKDICTEFSALKSVVMASPNEKIKMPVNEPAVGKKKSQIEEYIDFYDGPGIQHIALRTDCILDTVRDLRARGVEFISVPGSYYENMKERLAKSSLKLEEKFEDIQALNILIDFDEGGYLLQLFTKPLMDRPTVFIEIIQRRNFEGFGAGNFKSLFEAIEREQAKRGNL.

VOC domains follow at residues 27–161 (GYDH…LIER) and 193–351 (HIDH…LFTK). Positions 196, 279, and 362 each coordinate Fe cation.

It belongs to the 4HPPD family. The cofactor is Fe cation.

It catalyses the reaction 3-(4-hydroxyphenyl)pyruvate + O2 = homogentisate + CO2. It participates in amino-acid degradation; L-phenylalanine degradation; acetoacetate and fumarate from L-phenylalanine: step 3/6. This chain is 4-hydroxyphenylpyruvate dioxygenase, found in Yarrowia lipolytica (strain CLIB 122 / E 150) (Yeast).